Here is a 279-residue protein sequence, read N- to C-terminus: Protein phosphatase 1 regulatory subunit 3E (279 aa).

2 positions are modified to phosphoserine: Ser16 and Ser33. The segment at 28-87 (RSQRPSLEEESEEEPGEGGTRPGARSRAHVPGRGRRARSAPAGGGGARTARSRSPDTRKR) is disordered. A compositionally biased stretch (basic residues) spans 51-65 (ARSRAHVPGRGRRAR). Ser66 is subject to Phosphoserine. Positions 87-90 (RVRF) match the PP1-binding motif motif. The CBM21 domain maps to 154–259 (AARLQAQRIC…NNGGRDYALL (106 aa)). Residues 176–198 (GSARVLDLAYEKRVSVRWSADGW) form a glycogen-binding motif region. Positions 248–256 (WDNNGGRDY) are substrate-binding motif.

Functionally, acts as a glycogen-targeting subunit for PP1. PP1 is involved in glycogen metabolism and contributes to the activation of glycogen synthase leading to an increase in glycogen synthesis. This chain is Protein phosphatase 1 regulatory subunit 3E (Ppp1r3e), found in Mus musculus (Mouse).